A 196-amino-acid polypeptide reads, in one-letter code: Adenylyl-sulfate kinase (196 aa).

Residue 31–38 participates in ATP binding; that stretch reads GLSGAGKS. Serine 105 (phosphoserine intermediate) is an active-site residue.

This sequence belongs to the APS kinase family.

It carries out the reaction adenosine 5'-phosphosulfate + ATP = 3'-phosphoadenylyl sulfate + ADP + H(+). Its pathway is sulfur metabolism; hydrogen sulfide biosynthesis; sulfite from sulfate: step 2/3. In terms of biological role, catalyzes the synthesis of activated sulfate. This Aeromonas salmonicida (strain A449) protein is Adenylyl-sulfate kinase.